A 418-amino-acid chain; its full sequence is MDIKHYMHTVGRQARAASRRLAGATTAEKNAALLAIAAAIRRESAALVAANQEDLTAARAAGLETAMLDRLTLSAKGVESMAEGVEQVATLADPIGEMTDIKYRPSGIQVGKMRVPLGVIGIIYEARPNVTADAAALCLKSGNAAILRGGSEAIRSNRAIAALVHEGLKAAGLPAESVQVIDTTDRAAVGELITMREFVDVIVPRGGKGLIARLLAESRVPMIQHLDGNCHVYLEAEADPAKALKIVENAKTQRYGTCNTAESLLVDRSVAAMLLPPIAAMLTAKGVEIRGCAETQAIVPNAIAATEEDYYTEYLAPIISVKVVSGIDEAIEHINQYSSHHSEAIITDNHPKAMRFLREVDSASVMINASTRFADGFEYGLGAEIGISTDKIHARGPVGLEGLTSQKWVVLGDGHVRG.

This sequence belongs to the gamma-glutamyl phosphate reductase family.

It localises to the cytoplasm. The catalysed reaction is L-glutamate 5-semialdehyde + phosphate + NADP(+) = L-glutamyl 5-phosphate + NADPH + H(+). It participates in amino-acid biosynthesis; L-proline biosynthesis; L-glutamate 5-semialdehyde from L-glutamate: step 2/2. Its function is as follows. Catalyzes the NADPH-dependent reduction of L-glutamate 5-phosphate into L-glutamate 5-semialdehyde and phosphate. The product spontaneously undergoes cyclization to form 1-pyrroline-5-carboxylate. This Dechloromonas aromatica (strain RCB) protein is Gamma-glutamyl phosphate reductase.